Here is a 202-residue protein sequence, read N- to C-terminus: Protein cuti-1 (202 aa).

At 1–37 the chain is on the cytoplasmic side; that stretch reads MPNDRVAPLPPNFVYSPHDKFYYAPATCNSMHYTTAS. A helical transmembrane segment spans residues 38–58; sequence YISAFIEFLVMGTGAICFYVM. At 59 to 68 the chain is on the extracellular side; it reads SHKSDSIGKW. A helical transmembrane segment spans residues 69–89; that stretch reads LFYIQAGITVLSLLTSALMAF. The Cytoplasmic segment spans residues 90-107; it reads GLWKENPQMLGSKLKFIE. Residues 108–128 form a helical membrane-spanning segment; sequence FIICFLLIWAVISIVCMAFGI. Residues 129 to 148 are Extracellular-facing; that stretch reads QFTRQVFGIFGKVHRIEQDY. Residues 149-169 form a helical membrane-spanning segment; the sequence is GPIWPFNIAVVSFFTAAIAIW. Over 170 to 202 the chain is Cytoplasmic; it reads TRIIIQGAADYLYDKAYFADKQNVELRESSKTR.

In terms of assembly, interacts with vps-39.

The protein resides in the cell membrane. It is found in the cytoplasm. Involved in cuticle formation and ensures cuticle shedding during larval development. Plays a role in maintaining the hypodermis. In association with vps-39, may play a role in vesicle tethering. This is Protein cuti-1 from Caenorhabditis elegans.